The primary structure comprises 300 residues: N-carbamoylputrescine amidase (300 aa).

The CN hydrolase domain occupies 8 to 266 (VTVAALQFAC…EAVLVAQFDL (259 aa)). Glutamate 47 functions as the Proton acceptor in the catalytic mechanism. The active-site Proton donor is lysine 120. Cysteine 157 functions as the Nucleophile in the catalytic mechanism.

This sequence belongs to the carbon-nitrogen hydrolase superfamily. Homooctamer.

It carries out the reaction N-carbamoylputrescine + H2O + 2 H(+) = putrescine + NH4(+) + CO2. It participates in amine and polyamine biosynthesis; putrescine biosynthesis via agmatine pathway; putrescine from N-carbamoylputrescine (amidase route): step 1/1. Its function is as follows. Involved in polyamine biosynthesis. This Solanum tuberosum (Potato) protein is N-carbamoylputrescine amidase (CPA).